A 175-amino-acid polypeptide reads, in one-letter code: MEDDKLIVRIISKEGEIIRLTEEGERFLSSCLSSLKDAILSLHSIEIKGNIVSGLGEGKIFLSMEYYKSQINKIMGFDPFPGTLNIVIYDKASLENRLLLDSSPSLMVPEYKQKDRVLGAVKLYPAAINKLTPAAVVIPLRTTHPKSVIEIISPFHLREKLNLKDGDEVTIEVYV.

54–59 contacts CDP; the sequence is GLGEGK. Residues threonine 83 and asparagine 85 each coordinate Mg(2+). FMN contacts are provided by threonine 142 and glutamate 150. 155–158 contacts CDP; it reads FHLR.

Belongs to the archaeal riboflavin kinase family. Mg(2+) is required as a cofactor.

The catalysed reaction is riboflavin + CTP = CDP + FMN + H(+). The protein operates within cofactor biosynthesis; FMN biosynthesis; FMN from riboflavin (CTP route): step 1/1. Its function is as follows. Catalyzes the CTP-dependent phosphorylation of riboflavin (vitamin B2) to form flavin mononucleotide (FMN). The sequence is that of Riboflavin kinase from Saccharolobus solfataricus (strain ATCC 35092 / DSM 1617 / JCM 11322 / P2) (Sulfolobus solfataricus).